A 372-amino-acid polypeptide reads, in one-letter code: Spermidine/putrescine import ATP-binding protein PotA (372 aa).

An ABC transporter domain is found at 12–242; the sequence is IQLKGLNKSF…PTNLFVARFI (231 aa). 44–51 is a binding site for ATP; the sequence is GPSGCGKT.

Belongs to the ABC transporter superfamily. Spermidine/putrescine importer (TC 3.A.1.11.1) family. As to quaternary structure, the complex is composed of two ATP-binding proteins (PotA), two transmembrane proteins (PotB and PotC) and a solute-binding protein (PotD).

It localises to the cell inner membrane. The enzyme catalyses ATP + H2O + polyamine-[polyamine-binding protein]Side 1 = ADP + phosphate + polyamineSide 2 + [polyamine-binding protein]Side 1.. Its function is as follows. Part of the ABC transporter complex PotABCD involved in spermidine/putrescine import. Responsible for energy coupling to the transport system. The polypeptide is Spermidine/putrescine import ATP-binding protein PotA (Photobacterium profundum (strain SS9)).